Reading from the N-terminus, the 248-residue chain is 2,3-bisphosphoglycerate-dependent phosphoglycerate mutase (248 aa).

Residues 8 to 15, 21 to 22, Arg-60, 87 to 90, Lys-98, 114 to 115, and 183 to 184 each bind substrate; these read RHGESLWN, TG, ERHY, RR, and GN. His-9 acts as the Tele-phosphohistidine intermediate in catalysis. Residue Glu-87 is the Proton donor/acceptor of the active site.

This sequence belongs to the phosphoglycerate mutase family. BPG-dependent PGAM subfamily.

The enzyme catalyses (2R)-2-phosphoglycerate = (2R)-3-phosphoglycerate. Its pathway is carbohydrate degradation; glycolysis; pyruvate from D-glyceraldehyde 3-phosphate: step 3/5. Functionally, catalyzes the interconversion of 2-phosphoglycerate and 3-phosphoglycerate. In Methanospirillum hungatei JF-1 (strain ATCC 27890 / DSM 864 / NBRC 100397 / JF-1), this protein is 2,3-bisphosphoglycerate-dependent phosphoglycerate mutase.